The primary structure comprises 179 residues: Cell division protein ZapC (179 aa).

The protein belongs to the ZapC family. Interacts directly with FtsZ.

The protein resides in the cytoplasm. In terms of biological role, contributes to the efficiency of the cell division process by stabilizing the polymeric form of the cell division protein FtsZ. Acts by promoting interactions between FtsZ protofilaments and suppressing the GTPase activity of FtsZ. This chain is Cell division protein ZapC, found in Ferrimonas balearica (strain DSM 9799 / CCM 4581 / KCTC 23876 / PAT).